The following is a 75-amino-acid chain: Defense protein 6 (75 aa).

The N-terminal stretch at 1 to 20 is a signal peptide; sequence MKTCLVFAFFLVAVFAAVQA. Positions 21-32 are excised as a propeptide; the sequence is EENDSPQTLPRR. Cystine bridges form between C44/C63, C49/C68, and C53/C70.

Belongs to the invertebrate defensin family.

The protein localises to the secreted. Its function is as follows. Has antibacterial activity. This is Defense protein 6 from Lonomia obliqua (Moth).